Reading from the N-terminus, the 747-residue chain is MSGSHVPSANGPFSALTPSMWPQEILAKYAQEEATVEQPEFRYDEFGFRVDKEDADGIPYSGQLLEDPPQRLRWQAHLEFTHNHDVGDLTWDKIAVSLPRSEKLRSLVLAGVPHSMRPQLWMRLSGALQKKRNSELSYREIVKNSSNDETIAAKQIEKDLLRTMPSNACFAHVSGVGVPRLRRVLRALAWLYPEIGYCQGTGMVAACLLLFLEEDDAFWMMCAIIEDLLPASYFSTTLLGVQTDQRVLRHLIVQYLPRLDRLLQEHDIELSLITLHWFLTAFASVVHIRLLLRLWDLFFYEGSLVLFQATLGMLRLKEDELIQSENSASIFNTLSDIPSQLEDADLLLAEAMRLAGSLTAVAVETQRRKHLAYLLADQGQLLGAPATTGLSQVVRRRTQRRKSGITSLLFGEDDLEAMKAKNIKQTELVADLREAILRVARHFQCTDPKNCNVELTPDYSMESHQRDHESYVACSRGHPRRAKALLDFERHDDDELGFRKNDIITIVSQKDEHCWVGELNGLRGWFPAKFVEVLDERSKEYSIAGDDAVTEGVTDLVRGTLCPALKALLEHGLKKPSLLGGACHPWLFIEEAAGREVERDFDSVYSRLVLCKTYRLDEDGKVLTPEELLYRAVQSVNVTHDAAHAQMDVKLRSLICVGLNEQVLHLWLEVLCSSLPTVEKWYQPWSFLRSPGWVQIKCELRVLCCFAFSLSQDWELPAKREEEKKPLKEGVQDMLVKHHLFSWDIDG.

The Rab-GAP TBC domain occupies 111–302 (GVPHSMRPQL…RLWDLFFYEG (192 aa)). The residue at position 403 (S403) is a Phosphoserine. Positions 412 to 435 (EDDLEAMKAKNIKQTELVADLREA) form a coiled coil. One can recognise an SH3 domain in the interval 477 to 536 (GHPRRAKALLDFERHDDDELGFRKNDIITIVSQKDEHCWVGELNGLRGWFPAKFVEVLDE). The 164-residue stretch at 552–715 (GVTDLVRGTL…FAFSLSQDWE (164 aa)) folds into the RUN domain.

Belongs to the small G protein signaling modulator family. In terms of assembly, interacts with GJA1. Interaction with GJA1 induces its degradation. Interacts via its RUN domain with the C-terminal region of NF2. Interacts with RAB3A, RAB4A, RAB5A, RAB8A, RAB11A, RAP1A, RAP1B, RAP2A, RAP2B and PDCD6I. No interaction with RAB27A.

It localises to the cytoplasm. Its function is as follows. May play a cooperative role in NF2-mediated growth suppression of cells. This Bos taurus (Bovine) protein is Small G protein signaling modulator 3.